Reading from the N-terminus, the 313-residue chain is tRNA dimethylallyltransferase (313 aa).

Residue 9–16 (GPTAVGKT) coordinates ATP. A substrate-binding site is contributed by 11-16 (TAVGKT). Residues 34 to 37 (DSMQ) form an interaction with substrate tRNA region.

It belongs to the IPP transferase family. In terms of assembly, monomer. Mg(2+) serves as cofactor.

It catalyses the reaction adenosine(37) in tRNA + dimethylallyl diphosphate = N(6)-dimethylallyladenosine(37) in tRNA + diphosphate. Functionally, catalyzes the transfer of a dimethylallyl group onto the adenine at position 37 in tRNAs that read codons beginning with uridine, leading to the formation of N6-(dimethylallyl)adenosine (i(6)A). The chain is tRNA dimethylallyltransferase from Lachnoclostridium phytofermentans (strain ATCC 700394 / DSM 18823 / ISDg) (Clostridium phytofermentans).